We begin with the raw amino-acid sequence, 401 residues long: S-adenosylmethionine synthase (401 aa).

H15 contributes to the ATP binding site. D17 provides a ligand contact to Mg(2+). Residue E43 coordinates K(+). L-methionine contacts are provided by E56 and Q99. A flexible loop region spans residues 99-109; sequence QSPEIGAGVDT. Positions 101–132 are disordered; that stretch reads PEIGAGVDTSHEVRGSSSTDEDDRQGAGDQGL. ATP contacts are provided by residues 174-176, D254, 260-261, A277, and K281; these read DGK and RK. D254 lines the L-methionine pocket. K285 contributes to the L-methionine binding site.

The protein belongs to the AdoMet synthase family. In terms of assembly, homotetramer; dimer of dimers. Mg(2+) serves as cofactor. Requires K(+) as cofactor.

The protein localises to the cytoplasm. It carries out the reaction L-methionine + ATP + H2O = S-adenosyl-L-methionine + phosphate + diphosphate. Its pathway is amino-acid biosynthesis; S-adenosyl-L-methionine biosynthesis; S-adenosyl-L-methionine from L-methionine: step 1/1. Its function is as follows. Catalyzes the formation of S-adenosylmethionine (AdoMet) from methionine and ATP. The overall synthetic reaction is composed of two sequential steps, AdoMet formation and the subsequent tripolyphosphate hydrolysis which occurs prior to release of AdoMet from the enzyme. This Corynebacterium urealyticum (strain ATCC 43042 / DSM 7109) protein is S-adenosylmethionine synthase.